The primary structure comprises 399 residues: Organelle RRM domain-containing protein 1, chloroplastic (399 aa).

The N-terminal 52 residues, 1–52 (MDAARASLLLAGGLAVSTSTSAVATAAQTVSIPHLSPHTRRRRQRRFLRLAS), are a transit peptide targeting the chloroplast. In terms of domain architecture, RRM spans 295–373 (KRLFVTGLSF…WMIVVDVAKH (79 aa)). Residues 377-399 (DRQPPYSASGRSNQVLRSRYHTG) form a disordered region.

The protein resides in the plastid. It is found in the chloroplast. Functionally, involved in C-to-U editing of chloroplastic RNA. Functions as major chloroplastic editing factor. Controls a majority of the chloroplastic editing sites. The sequence is that of Organelle RRM domain-containing protein 1, chloroplastic from Oryza sativa subsp. japonica (Rice).